Here is a 123-residue protein sequence, read N- to C-terminus: Guanine nucleotide exchange factor MSS4 (123 aa).

The residue at position 1 (methionine 1) is an N-acetylmethionine. An MSS4 domain is found at 9–123 (ELVSAEGRNR…YVALERVSHE (115 aa)). 4 residues coordinate Zn(2+): cysteine 23, cysteine 26, cysteine 94, and cysteine 97.

This sequence belongs to the DSS4/MSS4 family. As to quaternary structure, interacts with RAB8A. Ubiquitous.

Guanine-nucleotide-releasing protein that acts on members of the SEC4/YPT1/RAB subfamily. Stimulates GDP release from both YPT1, RAB3A and RAB10, but is less active on these proteins than on the SEC4 protein. Might play a general role in vesicular transport. The polypeptide is Guanine nucleotide exchange factor MSS4 (RABIF) (Homo sapiens (Human)).